The chain runs to 832 residues: Vacuolar transmembrane transporter penV (832 aa).

2 helical membrane-spanning segments follow: residues L39 to I59 and F117 to L137. Positions W152 to K171 are disordered. N-linked (GlcNAc...) asparagine glycosylation occurs at N158. A helical transmembrane segment spans residues Y178–L198. N-linked (GlcNAc...) asparagine glycosylation occurs at N214. Residues N291–V322 are disordered. Over residues Q302–H321 the composition is skewed to basic and acidic residues. 9 helical membrane passes run F434–L454, G483–L503, F524–F544, T560–L582, L587–A608, F623–F645, L650–Y672, M687–L707, and I713–F733. The tract at residues P754–S777 is disordered. The segment covering I759–S771 has biased composition (low complexity).

It belongs to the CSC1 (TC 1.A.17) family.

The protein resides in the vacuole membrane. In terms of biological role, vacuolar transmembrane transporter that participates in the first stage of the beta-lactam biosynthesis (the formation of the ACV tripeptide), probably taking part in the supply of amino acids from the vacuolar lumen to the vacuole-anchored ACV synthetase. This chain is Vacuolar transmembrane transporter penV, found in Penicillium rubens (strain ATCC 28089 / DSM 1075 / NRRL 1951 / Wisconsin 54-1255) (Penicillium chrysogenum).